Consider the following 283-residue polypeptide: Non-selective voltage-gated ion channel VDAC3 (283 aa).

Cysteine 2 bears the N-acetylcysteine mark. A Phosphothreonine modification is found at threonine 4. Residues lysine 12, lysine 15, and lysine 20 each carry the N6-acetyllysine modification. Beta stranded transmembrane passes span 26 to 35 and 39 to 47; these read MVKIDLRTKS and VEFSTSGHA. Residue lysine 53 forms a Glycyl lysine isopeptide (Lys-Gly) (interchain with G-Cter in ubiquitin) linkage. The next 3 membrane-spanning stretches (beta stranded) occupy residues 54–64, 69–76, and 80–89; these read ASGNLETKYKV, LTFTQKWN, and TLGTEISLEN. Lysine 90 is modified (N6-acetyllysine). Residues 95 to 104 traverse the membrane as a beta stranded segment; the sequence is LKLTLDTIFV. Residues lysine 109 and lysine 110 each participate in a glycyl lysine isopeptide (Lys-Gly) (interchain with G-Cter in ubiquitin) cross-link. A run of 10 beta stranded transmembrane segments spans residues 111–120, 123–130, 137–145, 150–158, 163–175, 178–185, 189–198, 202–211, 218–227, and 231–238; these read SGKLKASYKR, FSLGSNVD, TIYGWAVLA, LAGYQMSFD, KLSQ…GYKA, FQLHTHVN, EFGGSIYQKV, IETSINLAWT, RFGIAAKYKL, and TSLSAKVN. Serine 241 is subject to Phosphoserine. NAD(+) is bound by residues 242–244 and 260–264; these read LIG and SALID. 2 beta stranded membrane passes run 242–251 and 254–263; these read LIGLGYTQTL and GVKLTLSALI. The residue at position 266 (lysine 266) is an N6-acetyllysine; alternate. Lysine 266 is covalently cross-linked (Glycyl lysine isopeptide (Lys-Gly) (interchain with G-Cter in ubiquitin); alternate). Residues 273–282 form a beta stranded membrane-spanning segment; sequence HKVGLGFELE.

Belongs to the eukaryotic mitochondrial porin family. As to quaternary structure, interacts with ARMC12 in a TBC1D21-dependent manner. Interacts with MISFA. In terms of processing, ubiquitinated by PRKN during mitophagy, leading to its degradation and enhancement of mitophagy. Deubiquitinated by USP30.

It localises to the mitochondrion outer membrane. The protein localises to the membrane. It carries out the reaction chloride(in) = chloride(out). The catalysed reaction is K(+)(in) = K(+)(out). Its function is as follows. Non-selective voltage-gated ion channel that mediates the transport of anions and cations through the mitochondrion outer membrane and plasma membrane. Forms a high-conducting channel with a stable open state and a voltage-induced closure with a mild preference for anions over cations. Involved in male fertility and sperm mitochondrial sheath formation. The chain is Non-selective voltage-gated ion channel VDAC3 from Oryctolagus cuniculus (Rabbit).